The following is a 236-amino-acid chain: Eukaryotic translation initiation factor 3 subunit J (236 aa).

Disordered stretches follow at residues 1–88 and 188–236; these read MADD…LANM and SEKQ…DDFM. A compositionally biased stretch (acidic residues) spans 28-46; sequence GEDDDEDVKESWEDEEEKK. Composition is skewed to basic and acidic residues over residues 47-58, 68-88, and 188-197; these read DEEKPTKTEAPV, AKLE…LANM, and SEKQKMEKAN. Coiled coils occupy residues 61–112 and 174–209; these read KPNK…LKSA and ADIK…KGKV. Residues 201–210 show a composition bias toward basic residues; that stretch reads SAAKAKGKVS.

It belongs to the eIF-3 subunit J family. As to quaternary structure, component of the eukaryotic translation initiation factor 3 (eIF-3) complex. The eIF-3 complex interacts with pix.

The protein resides in the cytoplasm. Functionally, component of the eukaryotic translation initiation factor 3 (eIF-3) complex, which is involved in protein synthesis of a specialized repertoire of mRNAs and, together with other initiation factors, stimulates binding of mRNA and methionyl-tRNAi to the 40S ribosome. The eIF-3 complex specifically targets and initiates translation of a subset of mRNAs involved in cell proliferation. The protein is Eukaryotic translation initiation factor 3 subunit J of Drosophila virilis (Fruit fly).